A 117-amino-acid chain; its full sequence is G antigen 13 (117 aa).

The segment at 1–117 (MSWRGRSTYY…PEEGEKQSQC (117 aa)) is disordered. Composition is skewed to acidic residues over residues 32–45 (FSDE…EEGE) and 87–96 (ECEDGPDGQE). Basic and acidic residues predominate over residues 103–117 (EEVKTPEEGEKQSQC).

Belongs to the GAGE family.

The polypeptide is G antigen 13 (Homo sapiens (Human)).